A 442-amino-acid chain; its full sequence is Endothelin receptor type B (442 aa).

An N-terminal signal peptide occupies residues 1 to 26 (MQPPPSLCGRALVALVLACGLSRIWG). Residues 27 to 101 (EERGFPPDRA…GSIEIKETFK (75 aa)) are Extracellular-facing. N-linked (GlcNAc...) asparagine glycosylation is present at N59. The disordered stretch occupies residues 69–88 (AEVPKGDRTAGSPPRTISPP). The helical transmembrane segment at 102–126 (YINTVVSCLVFVLGIIGNSTLLRII) threads the bilayer. Topologically, residues 127–137 (YKNKCMRNGPN) are cytoplasmic. The chain crosses the membrane as a helical span at residues 138–163 (ILIASLALGDLLHIIIDIPITVYKLL). The Extracellular portion of the chain corresponds to 164–175 (AEDWPFGVEMCK). A disulfide bridge connects residues C174 and C255. Residues 176 to 197 (LVPFIQKASVGITVLSLCALSI) form a helical membrane-spanning segment. The Cytoplasmic portion of the chain corresponds to 198–218 (DRYRAVASWSRIKGIGVPKWT). A helical transmembrane segment spans residues 219 to 243 (AVEIVLIWVVSVVLAVPEAVGFDMI). The Extracellular portion of the chain corresponds to 244-271 (TIDYKGRYLRICLLHPTQKTAFMQFYKT). The helical transmembrane segment at 272–296 (AKDWWLFSFYFCLPLAITAFFYTLM) threads the bilayer. At 297 to 324 (TCEMLRKKSGMQIALNDHLKQRREVAKT) the chain is on the cytoplasmic side. S305 carries the post-translational modification Phosphoserine. A helical transmembrane segment spans residues 325 to 350 (VFCLVLVFALCWLPLHLSRILKLTIY). The Extracellular portion of the chain corresponds to 351–362 (DQNDPNRCELLS). The helical transmembrane segment at 363–389 (FLLVLDYIGINMASLNSCINPIALYLV) threads the bilayer. Topologically, residues 390 to 442 (SKRFKNCFKSCLCCWCQSFEEKQSLEEKQSCLKFKANDHGYDNFRSSNKYSSS) are cytoplasmic. S-palmitoyl cysteine attachment occurs at residues C402, C403, and C405. Position 419 is a phosphoserine (S419). Position 439 is a phosphotyrosine (Y439). S440, S441, and S442 each carry phosphoserine.

The protein belongs to the G-protein coupled receptor 1 family. Endothelin receptor subfamily. EDNRB sub-subfamily.

Its subcellular location is the cell membrane. Its function is as follows. Non-specific receptor for endothelin 1, 2, and 3. Mediates its action by association with G proteins that activate a phosphatidylinositol-calcium second messenger system. The chain is Endothelin receptor type B (EDNRB) from Canis lupus familiaris (Dog).